Here is a 533-residue protein sequence, read N- to C-terminus: Phosphoenolpyruvate carboxykinase (ATP) (533 aa).

3 residues coordinate substrate: Arg59, Tyr199, and Lys205. Residues Lys205, His224, and 240 to 248 (GLSGTGKTT) contribute to the ATP site. Residues Lys205 and His224 each coordinate Mn(2+). Asp261 is a binding site for Mn(2+). ATP is bound by residues Glu289, Arg325, 441 to 442 (RI), and Thr447. Arg325 lines the substrate pocket.

The protein belongs to the phosphoenolpyruvate carboxykinase (ATP) family. As to quaternary structure, monomer. Mn(2+) is required as a cofactor.

It localises to the cytoplasm. The catalysed reaction is oxaloacetate + ATP = phosphoenolpyruvate + ADP + CO2. It participates in carbohydrate biosynthesis; gluconeogenesis. Involved in the gluconeogenesis. Catalyzes the conversion of oxaloacetate (OAA) to phosphoenolpyruvate (PEP) through direct phosphoryl transfer between the nucleoside triphosphate and OAA. This is Phosphoenolpyruvate carboxykinase (ATP) from Idiomarina loihiensis (strain ATCC BAA-735 / DSM 15497 / L2-TR).